A 783-amino-acid chain; its full sequence is Zinc finger protein 107 (783 aa).

The C2H2-type 1; atypical zinc finger occupies 76–98 (FQCNKYVKVFDKFSNSNRYKRRH). 3 C2H2-type zinc fingers span residues 104–126 (FKCK…RRIH), 132–154 (YKCE…KRIH), and 160–182 (YKCE…KIIH). Lys186 participates in a covalent cross-link: Glycyl lysine isopeptide (Lys-Gly) (interchain with G-Cter in SUMO2). Residues 188–210 (NKCEECGKAFKQASHLTIHKIIH) form a C2H2-type 5 zinc finger. A C2H2-type 6; atypical zinc finger spans residues 216–238 (YKYEECGKVFSQSSHLTTQKILH). The C2H2-type 7 zinc-finger motif lies at 244 to 266 (YKCKECGKAFNLFSNLTNHKRIH). Residues 272–294 (YKCKECGRAFNISSNLNKQEKIH) form a C2H2-type 8; atypical zinc finger. The segment at 300 to 322 (NKCEECDKAFNRSLKLTAHKKIL) adopts a C2H2-type 9; atypical zinc-finger fold. 2 consecutive C2H2-type zinc fingers follow at residues 328–350 (YKCE…KIIH) and 356–378 (YKCK…KKIH). The C2H2-type 12; atypical zinc finger occupies 384-406 (YKCEECGKAFNQHSNLINHRKIY). C2H2-type zinc fingers lie at residues 412–434 (YKCE…KKIH), 440–462 (YKCE…KKIH), 468–490 (YKCE…KRIH), and 496–518 (YKCE…KIVH). The C2H2-type 17; atypical zinc finger occupies 524–546 (NKCEEFGKAFKQSSHRTIHKIIH). The C2H2-type 18; atypical zinc finger occupies 552–574 (YKCEEHGKVFNQSSNLTTQKIIH). The C2H2-type 19; atypical zinc-finger motif lies at 580-602 (YKFEEHGKAFNLFSNITNHKIIY). C2H2-type zinc fingers lie at residues 608–630 (HKCE…KRIH), 636–658 (YQCA…KIIH), 664–686 (YKCK…KKIH), 692–714 (YKCE…KKIH), and 720–742 (YKCE…KIIH). The C2H2-type 25; atypical zinc finger occupies 748-770 (YKCGDYGRAFNLSSNLTTHKKIH).

It belongs to the krueppel C2H2-type zinc-finger protein family. As to expression, expressed in brain, heart, skeletal muscle, kidney and pancreas. Weakly expressed in aorta, liver and lung.

It localises to the nucleus. Its function is as follows. May be involved in transcriptional regulation. The polypeptide is Zinc finger protein 107 (ZNF107) (Homo sapiens (Human)).